The sequence spans 198 residues: Recombination protein RecR (198 aa).

A C4-type zinc finger spans residues 57–72 (CSVCGHITDRDPCYIC). The Toprim domain maps to 80-175 (SVVCVVQEPK…KVTRIAHGLP (96 aa)).

The protein belongs to the RecR family.

In terms of biological role, may play a role in DNA repair. It seems to be involved in an RecBC-independent recombinational process of DNA repair. It may act with RecF and RecO. The protein is Recombination protein RecR of Bacillus anthracis (strain A0248).